Reading from the N-terminus, the 255-residue chain is tRNA (guanine-N(1)-)-methyltransferase (255 aa).

Residues Gly-114 and Ile-134–Leu-139 each bind S-adenosyl-L-methionine.

It belongs to the RNA methyltransferase TrmD family. As to quaternary structure, homodimer.

It localises to the cytoplasm. The catalysed reaction is guanosine(37) in tRNA + S-adenosyl-L-methionine = N(1)-methylguanosine(37) in tRNA + S-adenosyl-L-homocysteine + H(+). Its function is as follows. Specifically methylates guanosine-37 in various tRNAs. This Blochmanniella pennsylvanica (strain BPEN) protein is tRNA (guanine-N(1)-)-methyltransferase.